Reading from the N-terminus, the 465-residue chain is Flagellar hook-associated protein 2 (465 aa).

Residues 408–436 (VSKTLNKLTKDYNAASDRIDAQVARYKEQ) adopt a coiled-coil conformation.

Belongs to the FliD family. As to quaternary structure, homopentamer.

Its subcellular location is the secreted. It is found in the bacterial flagellum. Required for the morphogenesis and for the elongation of the flagellar filament by facilitating polymerization of the flagellin monomers at the tip of growing filament. Forms a capping structure, which prevents flagellin subunits (transported through the central channel of the flagellum) from leaking out without polymerization at the distal end. This Escherichia coli O157:H7 protein is Flagellar hook-associated protein 2 (fliD).